The primary structure comprises 909 residues: Probable dipeptidyl-aminopeptidase B (909 aa).

Residues 1–63 (MRVGSRINDE…HNHNGRAQGN (63 aa)) are disordered. The Cytoplasmic portion of the chain corresponds to 1 to 94 (MRVGSRINDE…NGKSNQRRTL (94 aa)). The segment covering 27–38 (DSSSTASISLTL) has biased composition (low complexity). The chain crosses the membrane as a helical; Signal-anchor for type II membrane protein span at residues 95 to 115 (IVFWLLVALCVGGWAVAFLFF). Over 116-909 (VTSPGNKTST…YSNFLPIRSF (794 aa)) the chain is Vacuolar. The N-linked (GlcNAc...) asparagine glycan is linked to N121. Residues 123–134 (TSTSPHSGSNSP) are compositionally biased toward polar residues. Residues 123 to 144 (TSTSPHSGSNSPEGDVTKPGIP) are disordered. N207, N303, and N355 each carry an N-linked (GlcNAc...) asparagine glycan. S760 acts as the Charge relay system in catalysis. Residues N814, N819, and N822 are each glycosylated (N-linked (GlcNAc...) asparagine). Residues D837 and H870 each act as charge relay system in the active site. A glycan (N-linked (GlcNAc...) asparagine) is linked at N888.

It belongs to the peptidase S9B family.

It is found in the vacuole membrane. It catalyses the reaction Release of an N-terminal dipeptide, Xaa-Yaa-|-Zaa-, from a polypeptide, preferentially when Yaa is Pro, provided Zaa is neither Pro nor hydroxyproline.. Type IV dipeptidyl-peptidase which removes N-terminal dipeptides sequentially from polypeptides having unsubstituted N-termini provided that the penultimate residue is proline. The chain is Probable dipeptidyl-aminopeptidase B (DAPB) from Arthroderma benhamiae (strain ATCC MYA-4681 / CBS 112371) (Trichophyton mentagrophytes).